The primary structure comprises 185 residues: Ribosome-recycling factor (185 aa).

This sequence belongs to the RRF family.

The protein resides in the cytoplasm. Functionally, responsible for the release of ribosomes from messenger RNA at the termination of protein biosynthesis. May increase the efficiency of translation by recycling ribosomes from one round of translation to another. This chain is Ribosome-recycling factor, found in Clostridium acetobutylicum (strain ATCC 824 / DSM 792 / JCM 1419 / IAM 19013 / LMG 5710 / NBRC 13948 / NRRL B-527 / VKM B-1787 / 2291 / W).